Consider the following 754-residue polypeptide: MGTQPARKLRNRVFPHPHNHRKEKPMANDQVPASKCPVMHGANTTGQNGNLNWWPNALNLDILHQHDRKTNPMDDGFNYAEAFQQLDLAAVKQDLHHLMTDSQSWWPADWGHYGGLMIRMAWHAAGTYRIADGRGGAATGNQRFAPLNSWPDNVNLDKARRLLWPIKKKYGNKLSWGDLIILAGTMAYESMGLKVYGFAGGREDIWHPEKDIYWGAEKEWLASSDHRYGSEDRESLENPLAAVQMGLIYVNPEGVDGHPDPLCTAQDVRTTFARMAMNDEETVALTAGGHTVGKCHGNSKAELIGPEPEGADVVEQGLGWHNQNGKGVGRETMSSGIEGAWTTHPTQWDNGYFYMLFNHEWELKKSPAGAWQWEPVNIKEEDKPVDVEDPNIRHNPIMTDADMAMIKDPIYRQISERFYREPDYFAEVFAKAWFKLTHRDLGPKSRYLGPDVPQEDLIWQDPIPPVDYTLSEGEIKELEQQILASGLTVSELVCTAWDSARTFRSSDYRGGANGARIRLEPQKNWPGNEPTRLAKVLAVLENIQANFAKPVSLADLIVLGGGAAIAKAALDGGIEVNVPFLPGRGDATQAMTDAESFTPLEPIHDGYRNWLKQDYAVSPEELLLERTQLMGLTAPEMTVLIGGMRVLGTNHGGTKHGVFTDRVGVLSNDFFVNLTDMAYQWRPAGNNLYEIGDRQTGEVKWTATKVDLVFGSNSILRSYAEVYAQDDNREKFVRDFVAAWTKVMNADRFDLPRG.

The disordered stretch occupies residues 1–29; it reads MGTQPARKLRNRVFPHPHNHRKEKPMAND. The segment covering 7-23 has biased composition (basic residues); that stretch reads RKLRNRVFPHPHNHRKE. Catalysis depends on W106, which acts as the Tryptophan radical intermediate. The tryptophyl-tyrosyl-methioninium (Trp-Tyr) (with M-275) cross-link spans 122-249; that stretch reads WHAAGTYRIA…LAAVQMGLIY (128 aa). H123 (proton acceptor) is an active-site residue. A cross-link (tryptophyl-tyrosyl-methioninium (Tyr-Met) (with W-122)) is located at residues 249-275; it reads YVNPEGVDGHPDPLCTAQDVRTTFARM. H290 lines the heme b pocket.

It belongs to the peroxidase family. Peroxidase/catalase subfamily. Homodimer. It depends on heme b as a cofactor. Formation of the three residue Trp-Tyr-Met cross-link is important for the catalase, but not the peroxidase activity of the enzyme.

The enzyme catalyses H2O2 + AH2 = A + 2 H2O. It catalyses the reaction 2 H2O2 = O2 + 2 H2O. Its function is as follows. Bifunctional enzyme with both catalase and broad-spectrum peroxidase activity. Also displays NADH oxidase, isoniazid hydrazine lyase and isonicotinoyl-NAD synthase activities. This Synechocystis sp. (strain ATCC 27184 / PCC 6803 / Kazusa) protein is Catalase-peroxidase.